The primary structure comprises 180 residues: Pro-glucagon (180 aa).

Residues 1–20 form the signal peptide; it reads MKTIYFVAGLLIMLVQGSWQ. The disordered stretch occupies residues 25-58; the sequence is DTEENPRSFPASQTEAHEDPDEMNEDKRHSQGTF. Residue serine 54 is modified to Phosphoserine. A propeptide spanning residues 84 to 89 is cleaved from the precursor; the sequence is NRNNIA. Residues serine 105 and serine 108 each carry the phosphoserine modification. The residue at position 127 (arginine 127) is an Arginine amide. Residues 131 to 145 constitute a propeptide that is removed on maturation; sequence DFPEEVAIAEELGRR. Phosphoserine occurs at positions 150 and 152.

Belongs to the glucagon family. In terms of processing, proglucagon is post-translationally processed in a tissue-specific manner in pancreatic A cells and intestinal L cells. In pancreatic A cells, the major bioactive hormone is glucagon cleaved by PCSK2/PC2. In the intestinal L cells PCSK1/PC1 liberates GLP-1, GLP-2, glicentin and oxyntomodulin. GLP-1 is further N-terminally truncated by post-translational processing in the intestinal L cells resulting in GLP-1(7-37) GLP-1-(7-36)amide. The C-terminal amidation is neither important for the metabolism of GLP-1 nor for its effects on the endocrine pancreas. In terms of tissue distribution, secreted in the A cells of the islets of Langerhans. Secreted in the A cells of the islets of Langerhans. Secreted from enteroendocrine L cells throughout the gastrointestinal tract. Also secreted in selected neurons in the brain. As to expression, secreted from enteroendocrine cells throughout the gastrointestinal tract. Also secreted in selected neurons in the brain. In terms of tissue distribution, secreted from enteroendocrine cells throughout the gastrointestinal tract.

The protein localises to the secreted. Plays a key role in glucose metabolism and homeostasis. Regulates blood glucose by increasing gluconeogenesis and decreasing glycolysis. A counterregulatory hormone of insulin, raises plasma glucose levels in response to insulin-induced hypoglycemia. Plays an important role in initiating and maintaining hyperglycemic conditions in diabetes. Functionally, potent stimulator of glucose-dependent insulin release. Also stimulates insulin release in response to IL6. Plays important roles on gastric motility and the suppression of plasma glucagon levels. May be involved in the suppression of satiety and stimulation of glucose disposal in peripheral tissues, independent of the actions of insulin. Has growth-promoting activities on intestinal epithelium. May also regulate the hypothalamic pituitary axis (HPA) via effects on LH, TSH, CRH, oxytocin, and vasopressin secretion. Increases islet mass through stimulation of islet neogenesis and pancreatic beta cell proliferation. Inhibits beta cell apoptosis. Its function is as follows. Stimulates intestinal growth and up-regulates villus height in the small intestine, concomitant with increased crypt cell proliferation and decreased enterocyte apoptosis. The gastrointestinal tract, from the stomach to the colon is the principal target for GLP-2 action. Plays a key role in nutrient homeostasis, enhancing nutrient assimilation through enhanced gastrointestinal function, as well as increasing nutrient disposal. Stimulates intestinal glucose transport and decreases mucosal permeability. In terms of biological role, significantly reduces food intake. Inhibits gastric emptying in humans. Suppression of gastric emptying may lead to increased gastric distension, which may contribute to satiety by causing a sensation of fullness. May modulate gastric acid secretion and the gastro-pyloro-duodenal activity. May play an important role in intestinal mucosal growth in the early period of life. The chain is Pro-glucagon (Gcg) from Mus musculus (Mouse).